The following is a 154-amino-acid chain: Host transcription reprogramming factor 5 (154 aa).

Positions 1 to 19 (MQILRIAQLMALLATCASA) are cleaved as a signal peptide. The tract at residues 24 to 85 (TGSRVYSRDV…KRIKAEQNAR (62 aa)) is disordered. Positions 35 to 50 (QTQGGFSGSPTTNSPD) are enriched in polar residues. The span at 69–85 (ETEKERKKRIKAEQNAR) shows a compositional bias: basic and acidic residues. Residues 96–121 (YQCPYCSDPTVFSHSDALGRHIYTIH) form a C2H2-type; degenerate zinc finger.

It is found in the secreted. The protein resides in the host nucleus. Probable secreted effector that translocates into the nuclei of host cells to reprogram the expression of targeted genes by binding on effector binding elements in rice. This chain is Host transcription reprogramming factor 5, found in Pyricularia oryzae (strain 70-15 / ATCC MYA-4617 / FGSC 8958) (Rice blast fungus).